A 988-amino-acid chain; its full sequence is Squamosa promoter-binding-like protein 16 (988 aa).

The segment at 52-79 (GTPVDLTRPSKKVRSGSPGSGGGGGGNY) is disordered. Positions 69 to 78 (PGSGGGGGGN) are enriched in gly residues. The SBP-type zinc-finger motif lies at 79–156 (YPKCQVDNCK…DGHNRRRRKT (78 aa)). Zn(2+) contacts are provided by Cys-82, Cys-87, Cys-104, His-107, Cys-123, Cys-126, His-130, and Cys-142. Positions 139–155 (KRSCRRRLDGHNRRRRK) match the Bipartite nuclear localization signal motif. Disordered regions lie at residues 240–262 (RKNPEQPSPMNPQNSMNGASSPS) and 289–416 (GFGN…DTST). Composition is skewed to polar residues over residues 250-262 (NPQNSMNGASSPS), 301-311 (LTSSDHSATTS), and 327-358 (RTSSTNHSPSQYSDSRGQDTRSSLSLQLFTSS). A compositionally biased stretch (low complexity) spans 368–379 (ASSTKYYSSASS).

Zn(2+) is required as a cofactor.

It localises to the nucleus. Trans-acting factor that binds specifically to the consensus nucleotide sequence 5'-TNCGTACAA-3'. The chain is Squamosa promoter-binding-like protein 16 (SPL16) from Arabidopsis thaliana (Mouse-ear cress).